Here is a 405-residue protein sequence, read N- to C-terminus: ATP phosphoribosyltransferase regulatory subunit (405 aa).

Belongs to the class-II aminoacyl-tRNA synthetase family. HisZ subfamily. Heteromultimer composed of HisG and HisZ subunits.

The protein resides in the cytoplasm. It participates in amino-acid biosynthesis; L-histidine biosynthesis; L-histidine from 5-phospho-alpha-D-ribose 1-diphosphate: step 1/9. Functionally, required for the first step of histidine biosynthesis. May allow the feedback regulation of ATP phosphoribosyltransferase activity by histidine. The sequence is that of ATP phosphoribosyltransferase regulatory subunit from Oceanobacillus iheyensis (strain DSM 14371 / CIP 107618 / JCM 11309 / KCTC 3954 / HTE831).